The sequence spans 479 residues: Isoprimeverose transporter (479 aa).

The next 11 membrane-spanning stretches (helical) occupy residues 54–74, 102–122, 131–151, 174–194, 205–225, 253–273, 289–309, 321–341, 348–368, 397–417, and 431–451; these read MFFY…LFLV, PYWL…FTVP, VWAY…NIPI, FMGT…VAYF, WFMV…IVFA, WPWV…QTRS, LASF…ITPW, LMGM…SKAL, VGTI…AVML, FGMG…GYVA, and MNYV…LLFY.

It belongs to the sodium:galactoside symporter (TC 2.A.2) family.

It localises to the cell membrane. Its function is as follows. Involved in the metabolism of isoprimeverose. Transports isoprimeverose into the cell. Transport is driven by the proton motive force generated by malolactic fermentation. Cannot transport D-xylose. This chain is Isoprimeverose transporter, found in Lactiplantibacillus pentosus (Lactobacillus pentosus).